Here is a 58-residue protein sequence, read N- to C-terminus: Probable ferredoxin (58 aa).

4Fe-4S ferredoxin-type domains lie at 2-30 (VAKVNVDLCTGCGSCVDECPAAAISLNDD) and 31-58 (GIATVDESECLDCGSCEDACPNNAITIE). [4Fe-4S] cluster is bound by residues Cys10, Cys13, Cys16, Cys20, Cys40, Cys43, Cys46, and Cys50.

Requires [4Fe-4S] cluster as cofactor.

In terms of biological role, ferredoxins are iron-sulfur proteins that transfer electrons in a wide variety of metabolic reactions. This Methanosarcina thermophila protein is Probable ferredoxin.